We begin with the raw amino-acid sequence, 841 residues long: MPPRCPFLRHLFFLLLLLSPWIMSPCGGAADDVTYPIVPSSPGRRSILQIRREPPTEPNTKLVVDRDGKVFLKQQPKETPYWSFSTGSPMHSLYQAPANNNTENATEITRPHIIVEYLNNSKAATTVDGYHNWTVQEFFRQKPLVTDDGVTLGSETTSAYLVDGRSGRLIHVYKSTGDTKITNALVKPASTEDFVNEPLLIRRTDSKLEHFSKTTGKLVWNLTVSHFRAALLCDPVFNSGYDLGPKLQTGIYMPLLCGSQIDVRGPEIVIRVLHDQPMNVKMLPSPSLNHFESENSIMPFGKARESRKLQEQHKQKYTYLFGQWSPVKLLAPLVLLGVVVSVFIKKFSSRGSDVSLKAGPSKKKKNRKSAKDTNRQSVPRGQDQFELIEGGQMLLGFNNFQSGATDGRKIGKLFLSSKEIAKGSNGTVVFEGIYEGRPVAVKRLVRSHHEVAFKEIQNLIASDQHTNIIRWYGVEYDQDFVYLSLERCTCSLDDLIKSYLEFSMTKVLENNDSTEGVAAYKIQLDSLEGVIKGNNFWKVGGHPSPLMLKLMRDIVCGIVHLHELGIVHRDLKPQNVLISKDMTLSAKLSDMGISKRMSRDMSSLGHLATGSGSSGWQAPEQLLQGRQTRAVDMFSLGCVIFYTITGCKHPFGDDLERDVNIVKNKVDLFLVEHVPEASDLISRLLNPDPDLRPSATEVLLHPMFWNSEMRLSFLRDASDRVELENREADSEILKAMESTAPVAIGGKWDEKLEPVFITNIGRYRRYKYDSIRDLLRVIRNKLNHHRELPPEIQELVGTVPEGFDEYFAVRFPKLLIEVYRVISLHCREEEVFRKYFKCDII.

The first 30 residues, 1-30 (MPPRCPFLRHLFFLLLLLSPWIMSPCGGAA), serve as a signal peptide directing secretion. Topologically, residues 31-323 (DDVTYPIVPS…KQKYTYLFGQ (293 aa)) are lumenal. N-linked (GlcNAc...) asparagine glycosylation is found at asparagine 100, asparagine 104, asparagine 119, asparagine 132, and asparagine 221. Residues 324 to 344 (WSPVKLLAPLVLLGVVVSVFI) traverse the membrane as a helical segment. Residues 345–841 (KKFSSRGSDV…FRKYFKCDII (497 aa)) are Cytoplasmic-facing. The interval 352 to 382 (SDVSLKAGPSKKKKNRKSAKDTNRQSVPRGQ) is disordered. The 291-residue stretch at 414-704 (FLSSKEIAKG…ATEVLLHPMF (291 aa)) folds into the Protein kinase domain. ATP-binding positions include 420 to 428 (IAKGSNGTV) and lysine 442. Aspartate 570 serves as the catalytic Proton acceptor. In terms of domain architecture, KEN spans 707 to 838 (SEMRLSFLRD…EEVFRKYFKC (132 aa)).

Belongs to the protein kinase superfamily. Ser/Thr protein kinase family. As to quaternary structure, homodimer; disulfide-linked. Dimer formation is driven by hydrophobic interactions within the N-terminal luminal domains and stabilized by disulfide bridges. Mg(2+) is required as a cofactor. Post-translationally, autophosphorylated. Ubiquitous. Detected in the vascular bundles of young plants, leaves, roots, seedlings and in the receptacles of flowers and vascular bundles of the petals.

The protein localises to the endoplasmic reticulum membrane. It catalyses the reaction L-seryl-[protein] + ATP = O-phospho-L-seryl-[protein] + ADP + H(+). It carries out the reaction L-threonyl-[protein] + ATP = O-phospho-L-threonyl-[protein] + ADP + H(+). The kinase domain is activated by trans-autophosphorylation. Kinase activity is required for activation of the endoribonuclease domain. Senses unfolded proteins in the lumen of the endoplasmic reticulum via its N-terminal domain which leads to enzyme auto-activation. The active endoribonuclease domain splices bZIP60 mRNA to generate a new C-terminus, converting it into a potent unfolded-protein response transcriptional activator which then induces transcription of UPR target genes. Involved in organ growth regulation. Plays a role in plant immunity and abiotic stress responses. In Arabidopsis thaliana (Mouse-ear cress), this protein is Serine/threonine-protein kinase/endoribonuclease IRE1a (IRE1A).